The chain runs to 1241 residues: Putative ABC transporter B family member 8 (1241 aa).

The helical transmembrane segment at 24–44 (FADWIDIVLMVLGSVGAIGDG) threads the bilayer. One can recognise an ABC transmembrane type-1 1 domain in the interval 33–323 (MVLGSVGAIG…ALTEIRYFSE (291 aa)). Asparagine 48 carries an N-linked (GlcNAc...) asparagine glycan. The next 5 membrane-spanning stretches (helical) occupy residues 82–102 (LYFV…GYCW), 157–177 (VPIF…SAYF), 183–203 (VVAI…GKYL), 263–283 (GLAV…AWYG), and 297–317 (IYAA…ALTE). An ABC transporter 1 domain is found at 360–596 (VEFERVTLVY…NNHYAKLVKL (237 aa)). Position 395 to 402 (395 to 402 (GASGSGKS)) interacts with ATP. Residues asparagine 571, asparagine 632, and asparagine 648 are each glycosylated (N-linked (GlcNAc...) asparagine). Residues 676–964 (SLVGCISATT…AGSMTSDLAK (289 aa)) form the ABC transmembrane type-1 2 domain. A run of 2 helical transmembrane segments spans residues 686–706 (FGAI…AFFA) and 716–736 (IHIY…LNLL). Asparagine 773 is a glycosylation site (N-linked (GlcNAc...) asparagine). Transmembrane regions (helical) follow at residues 797 to 815 (ISLL…IIGL) and 821 to 838 (LALV…CFYT). A glycan (N-linked (GlcNAc...) asparagine) is linked at asparagine 855. Helical transmembrane passes span 899–919 (AWLA…TWAL) and 933–953 (ISAG…KVIA). Residues 998–1236 (IELKNIDFSY…GGQFSRLAHA (239 aa)) form the ABC transporter 2 domain. ATP is bound at residue 1033–1040 (GTSGCGKS). Asparagine 1187 is a glycosylation site (N-linked (GlcNAc...) asparagine).

It belongs to the ABC transporter superfamily. ABCB family. Multidrug resistance exporter (TC 3.A.1.201) subfamily.

The protein resides in the membrane. In Arabidopsis thaliana (Mouse-ear cress), this protein is Putative ABC transporter B family member 8 (ABCB8).